The chain runs to 265 residues: MSDILNTILARKADEVAERSARVPLAELIARSADLPLTRGFAAAMQASIAAGDPAVIAEVKKASPSKGVIRPDFHPADIAVSYEFGGATCLSVLTDVDFFQGSDAYLRQARDACTLPVLRKDFTVDPYQVYEARVLGADCILLIVSALEDAQLADLSGLAMQLGLDVLVEVHDVDELERAVQVPVPLIGINNRNLRTFEVTLQTTLDMRAAVPRDRVLVTESGIVTQADVQLMRSNDVNAFLVGETFMRAAEPGESLRQLFFAHD.

The protein belongs to the TrpC family.

It carries out the reaction 1-(2-carboxyphenylamino)-1-deoxy-D-ribulose 5-phosphate + H(+) = (1S,2R)-1-C-(indol-3-yl)glycerol 3-phosphate + CO2 + H2O. The protein operates within amino-acid biosynthesis; L-tryptophan biosynthesis; L-tryptophan from chorismate: step 4/5. The chain is Indole-3-glycerol phosphate synthase from Xanthomonas oryzae pv. oryzae (strain PXO99A).